The following is a 109-amino-acid chain: Homeobox protein E60 (109 aa).

The interval 1 to 31 is disordered; sequence PRTRRVKRSDGRGNGGTPEEKRPRTAFSGEQ. Residues 20-79 constitute a DNA-binding region (homeobox); it reads EKRPRTAFSGEQLARLKREFAENRYLTERRRQQLSRDLGLNEAQIKIWFQNKRAKIKKAS.

The protein belongs to the engrailed homeobox family.

It is found in the nucleus. This Apis mellifera (Honeybee) protein is Homeobox protein E60.